The chain runs to 76 residues: Protein MATERNALLY EXPRESSED GENE 4 (76 aa).

Residues 1-27 (MEYRKRVDALVFFSLLLLGYFAAHAHG) form the signal peptide. A disulfide bridge connects residues C53 and C75.

This sequence belongs to the MEG family. Expressed exclusively in endosperm.

This is Protein MATERNALLY EXPRESSED GENE 4 (MEG4) from Zea mays (Maize).